Reading from the N-terminus, the 443-residue chain is ATP-dependent protease ATPase subunit HslU (443 aa).

Residues Ile18, 60 to 65, Asp256, Glu321, and Arg393 each bind ATP; that span reads GVGKTE.

The protein belongs to the ClpX chaperone family. HslU subfamily. As to quaternary structure, a double ring-shaped homohexamer of HslV is capped on each side by a ring-shaped HslU homohexamer. The assembly of the HslU/HslV complex is dependent on binding of ATP.

It localises to the cytoplasm. Its function is as follows. ATPase subunit of a proteasome-like degradation complex; this subunit has chaperone activity. The binding of ATP and its subsequent hydrolysis by HslU are essential for unfolding of protein substrates subsequently hydrolyzed by HslV. HslU recognizes the N-terminal part of its protein substrates and unfolds these before they are guided to HslV for hydrolysis. This Vibrio cholerae serotype O1 (strain ATCC 39315 / El Tor Inaba N16961) protein is ATP-dependent protease ATPase subunit HslU.